The following is a 62-amino-acid chain: U8-theraphotoxin-Cg1a 1 (62 aa).

An N-terminal signal peptide occupies residues 1-21 (MKTLVLFIIFGLAALFLLSSA). A propeptide spanning residues 22–29 (NELEETER) is cleaved from the precursor. 3 cysteine pairs are disulfide-bonded: Cys-31/Cys-46, Cys-38/Cys-51, and Cys-45/Cys-58.

This sequence belongs to the neurotoxin 10 (Hwtx-1) family. 30 (Jztx-14) subfamily. As to expression, expressed by the venom gland.

It is found in the secreted. In terms of biological role, probable ion channel inhibitor. The protein is U8-theraphotoxin-Cg1a 1 of Chilobrachys guangxiensis (Chinese earth tiger tarantula).